The primary structure comprises 218 residues: 3,4-dihydroxy-2-butanone 4-phosphate synthase (218 aa).

Residues 37 to 38, Asp-42, 150 to 154, and Glu-174 contribute to the D-ribulose 5-phosphate site; these read RE and RSGHT. Glu-38 is a Mg(2+) binding site. His-153 lines the Mg(2+) pocket.

It belongs to the DHBP synthase family. As to quaternary structure, homodimer. The cofactor is Mg(2+). It depends on Mn(2+) as a cofactor.

It carries out the reaction D-ribulose 5-phosphate = (2S)-2-hydroxy-3-oxobutyl phosphate + formate + H(+). It participates in cofactor biosynthesis; riboflavin biosynthesis; 2-hydroxy-3-oxobutyl phosphate from D-ribulose 5-phosphate: step 1/1. In terms of biological role, catalyzes the conversion of D-ribulose 5-phosphate to formate and 3,4-dihydroxy-2-butanone 4-phosphate. The polypeptide is 3,4-dihydroxy-2-butanone 4-phosphate synthase (Hamiltonella defensa subsp. Acyrthosiphon pisum (strain 5AT)).